We begin with the raw amino-acid sequence, 289 residues long: Trihelix transcription factor GT-3b (289 aa).

Residues 42–98 (WSVEETKELIGIRGELDQTFMETKRNKLLWEVISNKMRDKSFPRSPEQCKCKWKNLV) enclose the Myb-like domain. Positions 65 to 81 (KRNKLLWEVISNKMRDK) match the Bipartite nuclear localization signal motif. A disordered region spans residues 137 to 200 (ESEGGGGGTS…SNSSNSNNGV (64 aa)). Positions 156–168 (SDEEEENVNEELV) are enriched in acidic residues. The Nuclear localization signal signature appears at 179–188 (PKKNIAKKRK). Residues 190 to 199 (GSNSSNSNNG) show a composition bias toward low complexity. A coiled-coil region spans residues 223–275 (EAREKERAEKEEEWRRKMEELEKERLAMERMWRDREEQRRSREEMRAEKRDSL).

In terms of assembly, heterodimer with GT-3A. Associated with the mediator complex.

The protein resides in the nucleus. Functionally, probable transcription factor that may play a role in the induction of CAM4 in response to pathogen and salt. This is Trihelix transcription factor GT-3b (GT-3B) from Arabidopsis thaliana (Mouse-ear cress).